We begin with the raw amino-acid sequence, 102 residues long: Large ribosomal subunit protein bL21 (102 aa).

Belongs to the bacterial ribosomal protein bL21 family. Part of the 50S ribosomal subunit. Contacts protein L20.

Its function is as follows. This protein binds to 23S rRNA in the presence of protein L20. The sequence is that of Large ribosomal subunit protein bL21 from Ehrlichia ruminantium (strain Gardel).